The following is a 497-amino-acid chain: Cytochrome P450 71A16 (497 aa).

Residues 1–21 (MEMMILISLCLTTFLTILLFF) form a helical membrane-spanning segment. C439 serves as a coordination point for heme.

It belongs to the cytochrome P450 family. It depends on heme as a cofactor.

It is found in the membrane. Its function is as follows. Possesses triterpene oxidizing activity. Catalyzes the C23 hydroxylation of marneral to form 23-hydroxymarneral. Catalyzes the C23 hydroxylation of marnerol to form 23-hydroxymarnerol. The sequence is that of Cytochrome P450 71A16 (CYP71A16) from Arabidopsis thaliana (Mouse-ear cress).